The chain runs to 544 residues: Formate--tetrahydrofolate ligase (544 aa).

63-70 is an ATP binding site; that stretch reads TPAGEGKS.

It belongs to the formate--tetrahydrofolate ligase family.

It catalyses the reaction (6S)-5,6,7,8-tetrahydrofolate + formate + ATP = (6R)-10-formyltetrahydrofolate + ADP + phosphate. It participates in one-carbon metabolism; tetrahydrofolate interconversion. The sequence is that of Formate--tetrahydrofolate ligase from Fusobacterium nucleatum subsp. nucleatum (strain ATCC 25586 / DSM 15643 / BCRC 10681 / CIP 101130 / JCM 8532 / KCTC 2640 / LMG 13131 / VPI 4355).